A 387-amino-acid chain; its full sequence is Methylthioribose-1-phosphate isomerase (387 aa).

The active-site Proton donor is the Asp257.

It belongs to the eIF-2B alpha/beta/delta subunits family. MtnA subfamily.

It localises to the cytoplasm. Its subcellular location is the nucleus. The enzyme catalyses 5-(methylsulfanyl)-alpha-D-ribose 1-phosphate = 5-(methylsulfanyl)-D-ribulose 1-phosphate. Its pathway is amino-acid biosynthesis; L-methionine biosynthesis via salvage pathway; L-methionine from S-methyl-5-thio-alpha-D-ribose 1-phosphate: step 1/6. Its function is as follows. Catalyzes the interconversion of methylthioribose-1-phosphate (MTR-1-P) into methylthioribulose-1-phosphate (MTRu-1-P). In Neosartorya fischeri (strain ATCC 1020 / DSM 3700 / CBS 544.65 / FGSC A1164 / JCM 1740 / NRRL 181 / WB 181) (Aspergillus fischerianus), this protein is Methylthioribose-1-phosphate isomerase (mri1).